The chain runs to 107 residues: Universal stress protein B homolog (107 aa).

The next 2 helical transmembrane spans lie at 6–23 (TILF…ARYF) and 89–106 (LFIL…SSFI).

Belongs to the universal stress protein B family.

It localises to the cell inner membrane. This is Universal stress protein B homolog from Vibrio atlanticus (strain LGP32) (Vibrio splendidus (strain Mel32)).